A 428-amino-acid polypeptide reads, in one-letter code: MPLNSYIFFLFLTTSPRNTFFGIRTHSDRIMATEHITRTGDEYNVELLPSDDDAPPLESSWRLNLDAFQLPSSTGGRHDGRTRFSRYFRTPRKERRVSEYYKKQERLLEGFNEMETIHENGFASGVPTEEEMKKLAKSERLAVHISNATNLVLFVAKVYASMESRSMAVIASTLDSLLDLLSGFILWFTANAMRKPNQFHYPIGKRRMQPVGIIVFASVMATLGLQVLLESGRQLVAKSGIHMNSTEEKWMIGIMVSVTIVKFLLMLYCRGFQNEIVRAYAQDHLFDVVTNSIGLATAVLAVKFYWWIDPTGAILIALYTIATWARTVLENVHSLIGRSAPPDFLAKLTFLIWNHHEQIKHIDTVRAYTFGSHYFVEVDIVLPEDMRLQEAHNIGETLQEKLEQLAEVERAFVHIDFEFTHRPEHKCN.

Residues 1–140 (MPLNSYIFFL…EMKKLAKSER (140 aa)) lie on the Cytoplasmic side of the membrane. A helical transmembrane segment spans residues 141–161 (LAVHISNATNLVLFVAKVYAS). The Vacuolar portion of the chain corresponds to 162-167 (MESRSM). Residues 168 to 188 (AVIASTLDSLLDLLSGFILWF) traverse the membrane as a helical segment. Residues 189-209 (TANAMRKPNQFHYPIGKRRMQ) are Cytoplasmic-facing. The chain crosses the membrane as a helical span at residues 210 to 230 (PVGIIVFASVMATLGLQVLLE). The Vacuolar portion of the chain corresponds to 231-248 (SGRQLVAKSGIHMNSTEE). A helical transmembrane segment spans residues 249-269 (KWMIGIMVSVTIVKFLLMLYC). Topologically, residues 270-287 (RGFQNEIVRAYAQDHLFD) are cytoplasmic. A helical transmembrane segment spans residues 288–308 (VVTNSIGLATAVLAVKFYWWI). Residues 309-311 (DPT) lie on the Vacuolar side of the membrane. The chain crosses the membrane as a helical span at residues 312 to 332 (GAILIALYTIATWARTVLENV). At 333-428 (HSLIGRSAPP…FTHRPEHKCN (96 aa)) the chain is on the cytoplasmic side.

This sequence belongs to the cation diffusion facilitator (CDF) transporter (TC 2.A.4) family. SLC30A subfamily.

It localises to the vacuole membrane. Its function is as follows. Involved in sequestration of excess metal in the cytoplasm into vacuoles to maintain metal homeostasis. The chain is Metal tolerance protein 10 (MTP10) from Arabidopsis thaliana (Mouse-ear cress).